The following is a 427-amino-acid chain: 12-alpha,13-alpha-dihydroxyfumitremorgin C prenyltransferase (427 aa).

E94 serves as a coordination point for substrate. 8 residues coordinate dimethylallyl diphosphate: R105, K192, Y194, Y268, Q353, Y355, Y419, and Y423.

This sequence belongs to the tryptophan dimethylallyltransferase family.

It carries out the reaction 12alpha,13alpha-dihydroxyfumitremorgin C + dimethylallyl diphosphate = fumitremorgin B + diphosphate. The protein operates within mycotoxin biosynthesis. Its function is as follows. 12-alpha,13-alpha-dihydroxyfumitremorgin C prenyltransferase; part of the gene cluster that mediates the biosynthesis of fumitremorgins, indole alkaloids that carry not only intriguing chemical structures, but also interesting biological and pharmacological activities. The biosynthesis of fumitremorgin-type alkaloids begins by condensation of the two amino acids L-tryptophan and L-proline to brevianamide F, catalyzed by the non-ribosomal peptide synthetase ftmA. Brevianamide F is then prenylated by the prenyltransferase ftmPT1/ftmB in the presence of dimethylallyl diphosphate, resulting in the formation of tryprostatin B. The three cytochrome P450 monooxygenases, ftmP450-1/ftmC, ftmP450-2/ftmE and ftmP450-3/FtmG, are responsible for the conversion of tryprostatin B to 6-hydroxytryprostatin B, tryprostatin A to fumitremorgin C and fumitremorgin C to 12,13-dihydroxyfumitremorgin C, respectively. The putative methyltransferase ftmMT/ftmD is expected for the conversion of 6-hydroxytryprostatin B to tryprostatin A. FtmPT2/FtmH catalyzes the prenylation of 12,13-dihydroxyfumitre-morgin C in the presence of dimethylallyl diphosphate, resulting in the formation of fumitremorgin B. Fumitremorgin B is further converted to verruculogen by ftmOx1/ftmF via the insertion of an endoperoxide bond between the two prenyl moieties. In some fungal species, verruculogen is further converted to fumitremorgin A, but the enzymes involved in this step have not been identified yet. The polypeptide is 12-alpha,13-alpha-dihydroxyfumitremorgin C prenyltransferase (Aspergillus fumigatus (strain ATCC MYA-4609 / CBS 101355 / FGSC A1100 / Af293) (Neosartorya fumigata)).